An 87-amino-acid chain; its full sequence is UPF0250 protein Spro_1197 (87 aa).

It belongs to the UPF0250 family.

The polypeptide is UPF0250 protein Spro_1197 (Serratia proteamaculans (strain 568)).